The chain runs to 269 residues: Protein OPG079 (269 aa).

Belongs to the orthopoxvirus OPG079 family. As to quaternary structure, homoomultimer (Potential). Interacts with the small subunit of ribonucleotide reductase.

It is found in the host cytoplasm. Plays an essential role in viral DNA replication. Binds to ssDNA with high affinity and localizes to cytoplasmic factories where nascent viral genomes accumulate. May disrupt loops, hairpins and other secondary structures present on ssDNA to reduce and eliminate pausing of viral DNA polymerase at specific sites during elongation. In Cynomys gunnisoni (Gunnison's prairie dog), this protein is Protein OPG079 (OPG079).